A 336-amino-acid polypeptide reads, in one-letter code: Protein REVEILLE 7-like (336 aa).

The region spanning Thr-60–Ala-114 is the HTH myb-type domain. Positions Trp-87–Phe-110 form a DNA-binding region, H-T-H motif. Residues Ala-114 to Ile-197 are disordered. Residues Arg-134 to Pro-144 are compositionally biased toward basic residues. The span at Arg-145 to Asn-158 shows a compositional bias: pro residues. Residues Lys-167–Gln-189 show a composition bias toward polar residues.

Its subcellular location is the nucleus. Probable transcription factor. In Arabidopsis thaliana (Mouse-ear cress), this protein is Protein REVEILLE 7-like (RVE7L).